The chain runs to 294 residues: Probable 3-hydroxyisobutyrate dehydrogenase (294 aa).

NAD(+)-binding positions include Thr3–Asp31 and Thr93. Lys168 is a catalytic residue. An NAD(+)-binding site is contributed by Lys243.

The protein belongs to the HIBADH-related family.

It carries out the reaction 3-hydroxy-2-methylpropanoate + NAD(+) = 2-methyl-3-oxopropanoate + NADH + H(+). It participates in amino-acid degradation; L-valine degradation. This Mycobacterium bovis (strain ATCC BAA-935 / AF2122/97) protein is Probable 3-hydroxyisobutyrate dehydrogenase (mmsB).